The sequence spans 401 residues: Bifunctional sugar-1-phosphate nucleotidylyltransferase/acetyltransferase (401 aa).

Residues 1 to 220 form a nucleotidylyltransferase region; it reads MKAFILAAGS…KPWNIIDVNK (220 aa). A ribonucleoside 5'-triphosphate-binding positions include 8–13, glutamine 73, and glycine 79; that span reads AGSGER. The N-acetyl-alpha-D-glucosamine 1-phosphate site is built by threonine 80, tyrosine 97, glycine 131, glutamate 146, and asparagine 157. Positions 236–401 are acetyltransferase; it reads EDNVKIKGKV…DVGYGEFFKV (166 aa).

In the N-terminal section; belongs to the N-acetylglucosamine-1-phosphate uridyltransferase family. The protein in the C-terminal section; belongs to the transferase hexapeptide repeat family. In terms of assembly, homotrimer. It depends on Co(2+) as a cofactor. Mn(2+) is required as a cofactor.

It carries out the reaction dTTP + alpha-D-glucose 1-phosphate + H(+) = dTDP-alpha-D-glucose + diphosphate. It catalyses the reaction alpha-D-glucose 1-phosphate + UTP + H(+) = UDP-alpha-D-glucose + diphosphate. The enzyme catalyses N-acetyl-alpha-D-galactosamine 1-phosphate + UTP + H(+) = UDP-N-acetyl-alpha-D-galactosamine + diphosphate. The catalysed reaction is N-acetyl-alpha-D-glucosamine 1-phosphate + UTP + H(+) = UDP-N-acetyl-alpha-D-glucosamine + diphosphate. It carries out the reaction alpha-D-galactosamine 1-phosphate + acetyl-CoA = N-acetyl-alpha-D-galactosamine 1-phosphate + CoA + H(+). It catalyses the reaction alpha-D-glucosamine 1-phosphate + acetyl-CoA = N-acetyl-alpha-D-glucosamine 1-phosphate + CoA + H(+). The protein operates within nucleotide-sugar biosynthesis; UDP-N-acetyl-alpha-D-glucosamine biosynthesis; N-acetyl-alpha-D-glucosamine 1-phosphate from alpha-D-glucosamine 6-phosphate (route II): step 2/2. Its pathway is nucleotide-sugar biosynthesis; UDP-N-acetyl-alpha-D-glucosamine biosynthesis; UDP-N-acetyl-alpha-D-glucosamine from N-acetyl-alpha-D-glucosamine 1-phosphate: step 1/1. With respect to regulation, glcN-1-P acetyltransferase activity is inhibited by divalent cations. GalN-1-P acetyltransferase activity is enhanced by Co(2+), Mg(2+) and Ca(2+), but inhibited by Zn(2+) or Mn(2+). Its function is as follows. Bifunctional enzyme involved in the synthesis of UDP-N-acetylglucosamine (UDP-GlcNAc) and UDP-N-acetylgalactosamine (UDP-GalNAc). It has multiple amino-sugar-1-phosphate acetyltransferase activities, including glucosamine-1-phosphate (GlcN-1-P) acetyltransferase and galactosamine-1-phosphate (GalN-1-P) acetyltransferase activities, and multiple sugar-1-phosphate nucleotidylyltransferase activities, including N-acetylglucosamine-1-phosphate (GlcNAc-1-P) uridyltransferase and N-acetylgalactosamine-1-phosphate (GalNAc-1-P) uridyltransferase activities. Also catalyzes the formation of dTDP-glucose from dTTP and glucose-1-phosphate (Glc-1-P), and the reverse reaction, which produces dTTP from dTDP-glucose and diphosphate. Can also catalyze the formation of UDP-glucose from UTP and glucose-1-phosphate. The polypeptide is Bifunctional sugar-1-phosphate nucleotidylyltransferase/acetyltransferase (Sulfurisphaera tokodaii (strain DSM 16993 / JCM 10545 / NBRC 100140 / 7) (Sulfolobus tokodaii)).